We begin with the raw amino-acid sequence, 181 residues long: Adenine phosphoribosyltransferase (181 aa).

Belongs to the purine/pyrimidine phosphoribosyltransferase family. Homodimer.

The protein resides in the cytoplasm. The enzyme catalyses AMP + diphosphate = 5-phospho-alpha-D-ribose 1-diphosphate + adenine. Its pathway is purine metabolism; AMP biosynthesis via salvage pathway; AMP from adenine: step 1/1. In terms of biological role, catalyzes a salvage reaction resulting in the formation of AMP, that is energically less costly than de novo synthesis. This Rhodopseudomonas palustris (strain HaA2) protein is Adenine phosphoribosyltransferase.